The sequence spans 239 residues: Probable 2-phosphosulfolactate phosphatase (239 aa).

This sequence belongs to the ComB family. Mg(2+) is required as a cofactor.

It carries out the reaction (2R)-O-phospho-3-sulfolactate + H2O = (2R)-3-sulfolactate + phosphate. This chain is Probable 2-phosphosulfolactate phosphatase, found in Clostridium botulinum (strain Loch Maree / Type A3).